A 573-amino-acid polypeptide reads, in one-letter code: Proline--tRNA ligase (573 aa).

Belongs to the class-II aminoacyl-tRNA synthetase family. ProS type 1 subfamily. As to quaternary structure, homodimer.

Its subcellular location is the cytoplasm. The catalysed reaction is tRNA(Pro) + L-proline + ATP = L-prolyl-tRNA(Pro) + AMP + diphosphate. Catalyzes the attachment of proline to tRNA(Pro) in a two-step reaction: proline is first activated by ATP to form Pro-AMP and then transferred to the acceptor end of tRNA(Pro). As ProRS can inadvertently accommodate and process non-cognate amino acids such as alanine and cysteine, to avoid such errors it has two additional distinct editing activities against alanine. One activity is designated as 'pretransfer' editing and involves the tRNA(Pro)-independent hydrolysis of activated Ala-AMP. The other activity is designated 'posttransfer' editing and involves deacylation of mischarged Ala-tRNA(Pro). The misacylated Cys-tRNA(Pro) is not edited by ProRS. This Moorella thermoacetica (strain ATCC 39073 / JCM 9320) protein is Proline--tRNA ligase.